A 352-amino-acid chain; its full sequence is Phosphoribosylformylglycinamidine cyclo-ligase (352 aa).

Belongs to the AIR synthase family.

Its subcellular location is the cytoplasm. The enzyme catalyses 2-formamido-N(1)-(5-O-phospho-beta-D-ribosyl)acetamidine + ATP = 5-amino-1-(5-phospho-beta-D-ribosyl)imidazole + ADP + phosphate + H(+). The protein operates within purine metabolism; IMP biosynthesis via de novo pathway; 5-amino-1-(5-phospho-D-ribosyl)imidazole from N(2)-formyl-N(1)-(5-phospho-D-ribosyl)glycinamide: step 2/2. In Nitrosospira multiformis (strain ATCC 25196 / NCIMB 11849 / C 71), this protein is Phosphoribosylformylglycinamidine cyclo-ligase.